A 449-amino-acid chain; its full sequence is Xylose isomerase (449 aa).

Residues histidine 101 and aspartate 104 contribute to the active site. Residues glutamate 232, glutamate 268, histidine 271, aspartate 296, aspartate 307, aspartate 309, and aspartate 340 each coordinate Mg(2+).

This sequence belongs to the xylose isomerase family. In terms of assembly, homotetramer. Mg(2+) is required as a cofactor.

Its subcellular location is the cytoplasm. It carries out the reaction alpha-D-xylose = alpha-D-xylulofuranose. The protein is Xylose isomerase of Bifidobacterium longum (strain NCC 2705).